The sequence spans 350 residues: Casein kinase II subunit alpha' (350 aa).

A Protein kinase domain is found at 40 to 325; that stretch reads YQLVRKLGRG…AKEAMEHPYF (286 aa). ATP is bound by residues 46 to 54 and Lys-69; that span reads LGRGKYSEV. The active-site Proton acceptor is the Asp-157.

This sequence belongs to the protein kinase superfamily. Ser/Thr protein kinase family. CK2 subfamily. Tetramer composed of an alpha chain, an alpha' and two beta chains.

It carries out the reaction L-seryl-[protein] + ATP = O-phospho-L-seryl-[protein] + ADP + H(+). It catalyses the reaction L-threonyl-[protein] + ATP = O-phospho-L-threonyl-[protein] + ADP + H(+). Its function is as follows. Casein kinases are operationally defined by their preferential utilization of acidic proteins such as caseins as substrates. The alpha and alpha' chains contain the catalytic site. Participates in Wnt signaling. This chain is Casein kinase II subunit alpha', found in Gallus gallus (Chicken).